The sequence spans 272 residues: Anamorsin homolog (272 aa).

Residues 1–156 (MDSMMNQKTV…KIGSSFALKK (156 aa)) form an N-terminal SAM-like domain region. The interval 157 to 185 (PVTNLFKIDLDDDVDLIDEDSLLTEEDLM) is linker. The [2Fe-2S] cluster site is built by cysteine 195, cysteine 202, cysteine 205, and cysteine 207. The interval 195 to 207 (CETTKKACKNCVC) is fe-S binding site A. Residues cysteine 233, cysteine 236, cysteine 244, and cysteine 247 each contribute to the [4Fe-4S] cluster site. 2 consecutive short sequence motifs (cx2C motif) follow at residues 233 to 236 (CGSC) and 244 to 247 (CGTC). The interval 233 to 247 (CGSCGLGDAFRCGTC) is fe-S binding site B.

The protein belongs to the anamorsin family. As to quaternary structure, monomer. Interacts with ATR3. [2Fe-2S] cluster is required as a cofactor. [4Fe-4S] cluster serves as cofactor.

The protein resides in the cytoplasm. It is found in the mitochondrion intermembrane space. Functionally, component of the cytosolic iron-sulfur (Fe-S) protein assembly (CIA) machinery. Required for the maturation of extramitochondrial Fe-S proteins. Part of an electron transfer chain functioning in an early step of cytosolic Fe-S biogenesis, facilitating the de novo assembly of a [4Fe-4S] cluster on the cytosolic Fe-S scaffold complex. Electrons are transferred from NADPH via FAD- and FMN-containing diflavin oxidoreductase TAH18/ATR3. Together with the diflavin oxidoreductase, also required for the assembly of the diferric tyrosyl radical cofactor of ribonucleotide reductase (RNR), probably by providing electrons for reduction during radical cofactor maturation in the catalytic small subunit. Required for embryo development. The protein is Anamorsin homolog of Arabidopsis thaliana (Mouse-ear cress).